Consider the following 352-residue polypeptide: MVFRIASSPYTHNQRQTSRIMLLVLLAAIPGIATQLWFFGWGTLVQIILAVISALSAEALVLKLRNQPIAAILKDNSALLTGLLLAVSIPPLAPWWMVVLGTVFAVIIAKQLYGGLGQNPFNPAMIGYVVLLISFPVQMTNWLPPYEIAATVPGMADTLQVIFTGHTTSGGDMSTLRMGIDGISQATPLDTLKTSLHSGRSVEQIMQYPIFSGMLAGAGWQWVNLAWLAGGVWLLAIKVIRWHIPVSFLVSLALCATLGWLFAPESLASPQIHMLSGATMLGAFFILTDPVTASTTNRGRLIFGALAGVLVWLIRSFGGYPDGVAFAVLLANITVPLIDYYTRPRVYGHRKG.

5 consecutive transmembrane segments (helical) span residues 20–40 (IMLLVLLAAIPGIATQLWFFG), 42–62 (GTLVQIILAVISALSAEALVL), 68–88 (PIAAILKDNSALLTGLLLAVS), 89–109 (IPPLAPWWMVVLGTVFAVIIA), and 123–143 (PAMIGYVVLLISFPVQMTNWL). T187 is modified (FMN phosphoryl threonine). A run of 5 helical transmembrane segments spans residues 217–237 (GAGWQWVNLAWLAGGVWLLAI), 244–264 (IPVSFLVSLALCATLGWLFAP), 267–287 (LASPQIHMLSGATMLGAFFIL), 301–321 (LIFGALAGVLVWLIRSFGGYP), and 322–342 (DGVAFAVLLANITVPLIDYYT).

Belongs to the NqrB/RnfD family. The complex is composed of six subunits: RsxA, RsxB, RsxC, RsxD, RsxE and RsxG. FMN is required as a cofactor.

The protein resides in the cell inner membrane. Part of a membrane-bound complex that couples electron transfer with translocation of ions across the membrane. Required to maintain the reduced state of SoxR. This is Ion-translocating oxidoreductase complex subunit D from Escherichia fergusonii (strain ATCC 35469 / DSM 13698 / CCUG 18766 / IAM 14443 / JCM 21226 / LMG 7866 / NBRC 102419 / NCTC 12128 / CDC 0568-73).